We begin with the raw amino-acid sequence, 160 residues long: Large ribosomal subunit protein uL16 (160 aa).

This sequence belongs to the universal ribosomal protein uL16 family. Part of the 50S ribosomal subunit.

Its function is as follows. Binds 23S rRNA and is also seen to make contacts with the A and possibly P site tRNAs. This chain is Large ribosomal subunit protein uL16, found in Prochlorococcus marinus (strain MIT 9515).